Reading from the N-terminus, the 292-residue chain is Undecaprenyl-diphosphatase (292 aa).

The next 5 helical transmembrane spans lie at 87 to 107, 113 to 133, 190 to 210, 219 to 239, and 250 to 270; these read MGWY…LFEE, FRDL…LGMV, AFLL…KDIG, ATIV…AWFM, and FVYY…FGVL.

It belongs to the UppP family.

It localises to the cell membrane. The catalysed reaction is di-trans,octa-cis-undecaprenyl diphosphate + H2O = di-trans,octa-cis-undecaprenyl phosphate + phosphate + H(+). Its function is as follows. Catalyzes the dephosphorylation of undecaprenyl diphosphate (UPP). Confers resistance to bacitracin. The sequence is that of Undecaprenyl-diphosphatase from Thermobifida fusca (strain YX).